The chain runs to 251 residues: Lactose phosphotransferase system repressor (251 aa).

The HTH deoR-type domain occupies 3 to 58 (KEERLEEITKLINKRGTIRVTEVVERLKVSDMTVRRDLTELEGLGVLTRIHGGARS). The segment at residues 20–39 (IRVTEVVERLKVSDMTVRRD) is a DNA-binding region (H-T-H motif).

Its function is as follows. Repressor of the lactose catabolism operon. Galactose-6-phosphate is the inducer. This Streptococcus mutans serotype c (strain ATCC 700610 / UA159) protein is Lactose phosphotransferase system repressor (lacR).